Reading from the N-terminus, the 79-residue chain is Small ribosomal subunit protein bS18 (79 aa).

The protein belongs to the bacterial ribosomal protein bS18 family. Part of the 30S ribosomal subunit. Forms a tight heterodimer with protein bS6.

Binds as a heterodimer with protein bS6 to the central domain of the 16S rRNA, where it helps stabilize the platform of the 30S subunit. This chain is Small ribosomal subunit protein bS18 (rpsR), found in Bacillus subtilis (strain 168).